A 1273-amino-acid chain; its full sequence is Cullin-associated NEDD8-dissociated protein 2 (1273 aa).

Serine 2 carries the N-acetylserine modification. HEAT repeat units follow at residues 2-36 (STGA…LDPL), 37-74 (PWLQ…ELQK), 82-119 (DSER…KVKE), 121-157 (QVEN…ELPP), 167-205 (SVCR…RLGA), 209-246 (TFHA…ACST), 248-284 (LFVE…SVGR), 292-329 (AHLD…KCPK), 364-405 (TEDS…SRPD), 409-446 (DFHC…HTRP), 469-506 (AQVP…VLPG), 554-591 (PHLP…TLWP), 602-641 (PYVG…HLGD), 685-722 (PILA…SQGL), 727-764 (PAVR…TQPA), 768-807 (EVSG…TRPP), 809-850 (VEYS…ALSA), 894-931 (GPQR…GNLP), 933-968 (FLPF…DNLK), 970-1003 (YVED…LVFV), 1004-1040 (NPPF…DQPH), 1044-1081 (PLLK…NKPS), 1085-1121 (DLLD…DDGL), 1142-1178 (LDIC…LCPA), 1194-1231 (TCTA…NPEV), and 1241-1273 (STQI…MELS). The tract at residues 352 to 383 (YNHDSDEEEQMETEDSEFSEQESEDEYSDDDD) is disordered. The segment covering 356–383 (SDEEEQMETEDSEFSEQESEDEYSDDDD) has biased composition (acidic residues).

This sequence belongs to the CAND family. In terms of assembly, binds TBP, CNOT3 and UBE3C. Ubiquitinated and targeted for proteasomal degradation. In terms of tissue distribution, detected in heart and skeletal muscle.

Its subcellular location is the nucleus. Probable assembly factor of SCF (SKP1-CUL1-F-box protein) E3 ubiquitin ligase complexes that promotes the exchange of the substrate-recognition F-box subunit in SCF complexes, thereby playing a key role in the cellular repertoire of SCF complexes. The polypeptide is Cullin-associated NEDD8-dissociated protein 2 (Cand2) (Rattus norvegicus (Rat)).